The following is a 411-amino-acid chain: MTAQTPIHVYSEIGKLKKVLLHRPGKEIENLMPDYLERLLFDDIPFLEDAQKEHDAFAQALRDEGIEVLDLETLAAESLGTPEIREAFIDEYLSEANIRGRATKKAIRELLMAIEDNQELIEKTMAGVQKSELPEIPASEKGLTDLVESNYPFAIDPMPNLYFTRDPFATIGTGVSLNHMFSETRNRETLYGKYIFTHHPIYGGGKVPMVYDRNETTRIEGGDELVLSKDVLAVGISQRTDAASIEKLLVNIFKQNLGFKKVLAFEFANNRKFMHLDTVFTMVDYDKFTIHPEIEGDLRVYSVTYDNEELHIVEEKGDLAELLAANLGVEKVDLIRCGGDNLVAAGREQWNDGSNTLTIAPGVVVVYNRNTITNAILESKGLKLIKIHGSELVRGRGGPRCMSMPFEREDI.

Cys-401 serves as the catalytic Amidino-cysteine intermediate.

The protein belongs to the arginine deiminase family.

Its subcellular location is the cytoplasm. It carries out the reaction L-arginine + H2O = L-citrulline + NH4(+). It functions in the pathway amino-acid degradation; L-arginine degradation via ADI pathway; carbamoyl phosphate from L-arginine: step 1/2. The polypeptide is Arginine deiminase (Streptococcus pyogenes serotype M49 (strain NZ131)).